A 116-amino-acid chain; its full sequence is uncharacterized protein (116 aa).

This is an uncharacterized protein from Acheta domesticus (House cricket).